The following is a 102-amino-acid chain: P antigen family member 4 (102 aa).

Positions 1–10 are enriched in basic residues; the sequence is MSARVRSRSR. Residues 1-102 are disordered; it reads MSARVRSRSR…KTKEAGDGQP (102 aa). Phosphoserine; by CLK2 is present on S7. S9 carries the post-translational modification Phosphoserine; by HIPK1 and CLK2. Over residues 45–85 the composition is skewed to basic and acidic residues; sequence GQEREGTPPIEERKVEGDCQEMDLEKTRSERGDGSDVKEKT. Residue T51 is modified to Phosphothreonine; by HIPK1 and CLK2. Phosphothreonine; by CLK2 is present on T71. Phosphoserine; by CLK2 is present on residues S73 and S79. T85 and T94 each carry phosphothreonine; by CLK2.

This sequence belongs to the GAGE family. As to quaternary structure, interacts with JUN. Post-translationally, HIPK1-mediated phosphorylation at Thr-51 leads to the compaction of its intrinsically disordered conformation and is critical for its ability to potentiate the transcriptional activator activity of JUN inspite of a reduced interaction with JUN. CLK2-mediated phosphorylation at multiple Ser and Thr residues attenuates its ability to potentiate JUN transcriptional activator activity. As to expression, expressed at basal lvels in the adult normal prostate gland but is highly up-regulated in the fetal prostate and prostate cancer cells. Preferentially expressed in normal male and female reproductive tissues, testis, fallopian tube, uterus, and placenta, as well as in testicular cancer, uterine cancer, cervical cancer and kidney cancer.

Its subcellular location is the cytoplasm. The protein resides in the nucleus. It is found in the mitochondrion. Its function is as follows. Intrinsically disordered protein that potentiates the transcriptional activator activity of JUN. Protects cells from stress-induced apoptosis by inhibiting reactive oxygen species (ROS) production and via regulation of the MAPK signaling pathway. The polypeptide is P antigen family member 4 (PAGE4) (Homo sapiens (Human)).